Here is a 452-residue protein sequence, read N- to C-terminus: Photoreceptor ankyrin repeat protein (452 aa).

ANK repeat units lie at residues 94-123 (CRLGALYWACVHNDPTQLQAILDGGVSPEE), 130-160 (NGRTGLMVACYHGFQSVVALLSHCPFLDVNQ), 164-193 (GGDTALMLAAQAGHVPLVSLLLNYYVGLDL), and 223-257 (RGKTALEWAVLTDSFDTVWRIRQLLRRPQVEQLSQ). 2 disordered regions span residues 335 to 369 (LGTRSKSVPELLGTAPPPPLVPQSPPGSPQRSPWV) and 405 to 427 (SKASSSSHQCQPKPSPSGHQSLA). Pro residues predominate over residues 349–362 (APPPPLVPQSPPGS). The segment covering 406–424 (KASSSSHQCQPKPSPSGHQ) has biased composition (polar residues).

It localises to the cytoplasm. Its subcellular location is the cytosol. The protein resides in the nucleus. Functionally, acts as a transcriptional repressor for CRX-activated photoreceptor gene regulation. The polypeptide is Photoreceptor ankyrin repeat protein (Homo sapiens (Human)).